Reading from the N-terminus, the 461-residue chain is tRNA modification GTPase MnmE (461 aa).

(6S)-5-formyl-5,6,7,8-tetrahydrofolate is bound by residues Arg-22, Glu-87, and Arg-126. Residues 222–382 (GLKTVIVGKP…LEETIFNMVV (161 aa)) enclose the TrmE-type G domain. Asn-232 is a K(+) binding site. GTP is bound by residues 232 to 237 (NVGKSS), 251 to 257 (TDIPGTT), and 276 to 279 (DTAG). Ser-236 lines the Mg(2+) pocket. Thr-251, Ile-253, and Thr-256 together coordinate K(+). Thr-257 contacts Mg(2+). Lys-461 is a binding site for (6S)-5-formyl-5,6,7,8-tetrahydrofolate.

The protein belongs to the TRAFAC class TrmE-Era-EngA-EngB-Septin-like GTPase superfamily. TrmE GTPase family. As to quaternary structure, homodimer. Heterotetramer of two MnmE and two MnmG subunits. Requires K(+) as cofactor.

The protein localises to the cytoplasm. Exhibits a very high intrinsic GTPase hydrolysis rate. Involved in the addition of a carboxymethylaminomethyl (cmnm) group at the wobble position (U34) of certain tRNAs, forming tRNA-cmnm(5)s(2)U34. The polypeptide is tRNA modification GTPase MnmE (Desulforamulus reducens (strain ATCC BAA-1160 / DSM 100696 / MI-1) (Desulfotomaculum reducens)).